We begin with the raw amino-acid sequence, 203 residues long: Urease accessory protein UreG (203 aa).

A GTP-binding site is contributed by 10–17; that stretch reads GPVGAGKT.

Belongs to the SIMIBI class G3E GTPase family. UreG subfamily. As to quaternary structure, homodimer. UreD, UreF and UreG form a complex that acts as a GTP-hydrolysis-dependent molecular chaperone, activating the urease apoprotein by helping to assemble the nickel containing metallocenter of UreC. The UreE protein probably delivers the nickel.

Its subcellular location is the cytoplasm. Its function is as follows. Facilitates the functional incorporation of the urease nickel metallocenter. This process requires GTP hydrolysis, probably effectuated by UreG. In Kocuria rhizophila (strain ATCC 9341 / DSM 348 / NBRC 103217 / DC2201), this protein is Urease accessory protein UreG.